The primary structure comprises 292 residues: Elongation factor Ts (292 aa).

Residues 81–84 (TDFV) are involved in Mg(2+) ion dislocation from EF-Tu.

The protein belongs to the EF-Ts family.

The protein localises to the cytoplasm. Associates with the EF-Tu.GDP complex and induces the exchange of GDP to GTP. It remains bound to the aminoacyl-tRNA.EF-Tu.GTP complex up to the GTP hydrolysis stage on the ribosome. The protein is Elongation factor Ts of Alkalilimnicola ehrlichii (strain ATCC BAA-1101 / DSM 17681 / MLHE-1).